The sequence spans 192 residues: Ribosome maturation factor RimP (192 aa).

The protein belongs to the RimP family.

The protein resides in the cytoplasm. Required for maturation of 30S ribosomal subunits. The sequence is that of Ribosome maturation factor RimP from Delftia acidovorans (strain DSM 14801 / SPH-1).